The chain runs to 55 residues: Large ribosomal subunit protein bL33 (55 aa).

The protein belongs to the bacterial ribosomal protein bL33 family.

The polypeptide is Large ribosomal subunit protein bL33 (Methylorubrum extorquens (strain CM4 / NCIMB 13688) (Methylobacterium extorquens)).